The primary structure comprises 285 residues: uncharacterized protein (285 aa).

This is an uncharacterized protein from Borreliella burgdorferi (strain ATCC 35210 / DSM 4680 / CIP 102532 / B31) (Borrelia burgdorferi).